We begin with the raw amino-acid sequence, 21 residues long: QFPTDYDEGQDDRPKLGLGAR.

A Pyrrolidone carboxylic acid modification is found at Gln1. Over residues 1-10 (QFPTDYDEGQ) the composition is skewed to acidic residues. The segment at 1 to 21 (QFPTDYDEGQDDRPKLGLGAR) is disordered. The O-linked (GalNAc...) threonine glycan is linked to Thr4. Sulfotyrosine is present on Tyr6.

In terms of assembly, heterohexamer; disulfide linked. Contains 2 sets of 3 non-identical chains (alpha, beta and gamma). The 2 heterotrimers are in head to head conformation with the N-termini in a small central domain. Post-translationally, conversion of fibrinogen to fibrin is triggered by thrombin, which cleaves fibrinopeptides A and B from alpha and beta chains, and thus exposes the N-terminal polymerization sites responsible for the formation of the soft clot.

It localises to the secreted. In terms of biological role, cleaved by the protease thrombin to yield monomers which, together with fibrinogen alpha (FGA) and fibrinogen gamma (FGG), polymerize to form an insoluble fibrin matrix. Fibrin has a major function in hemostasis as one of the primary components of blood clots. In addition, functions during the early stages of wound repair to stabilize the lesion and guide cell migration during re-epithelialization. Was originally thought to be essential for platelet aggregation, based on in vitro studies using anticoagulated blood. However subsequent studies have shown that it is not absolutely required for thrombus formation in vivo. Enhances expression of SELP in activated platelets. Maternal fibrinogen is essential for successful pregnancy. Fibrin deposition is also associated with infection, where it protects against IFNG-mediated hemorrhage. May also facilitate the antibacterial immune response via both innate and T-cell mediated pathways. The chain is Fibrinogen beta chain (FGB) from Bubalus bubalis (Domestic water buffalo).